A 74-amino-acid polypeptide reads, in one-letter code: Histone H1.C8/H1.M1 (74 aa).

Residues 1–74 (MSDAAVPPKK…KAVKKAPKKK (74 aa)) are disordered. Over residues 11–74 (ASPKKAAAKK…KAVKKAPKKK (64 aa)) the composition is skewed to basic residues.

The protein localises to the nucleus. It is found in the chromosome. The chain is Histone H1.C8/H1.M1 from Trypanosoma cruzi.